The following is a 465-amino-acid chain: MTDTSSSQPAKAWSGRFSEPVSDLVKRYTASVSFDQRMAQQDIRGSLAHAKMLARQGIIGATDLADIERGMVQIRGEIERGEFAWNLDDEDVHLNIEKRLTALVGNPGKRLHTGRSRNDQVATDIRLWLRDAIDRILALIGEFQKNLLDVAEANAATPMPGFTHLQVAQPVTFGHHLMAYFEMSRRDAERFTDCRKRVNRLPLGAAALAGTSYPIDREFVARELGFDEVCHNSLDAVSDRDFAIEFCAASALLMTHLSRLSEELILWMSPRVGFIDLADRFCTGSSIMPQKKNPDVPELVRGKTGRVNGSLIALLTLMKGQPLAYNKDNQEDKEPLFDTADTVIDTLRIYADMITGIRVKADAMRDALKQGYATATDLADYLVKKGLPFRDAHEAVALAVRAAEAKGCDLPDFSLDELRAFSPLVGEDVFAVLTVEGSLASRAHVGGTAPEQVRAAITRARGKNA.

It belongs to the lyase 1 family. Argininosuccinate lyase subfamily.

The protein localises to the cytoplasm. The catalysed reaction is 2-(N(omega)-L-arginino)succinate = fumarate + L-arginine. The protein operates within amino-acid biosynthesis; L-arginine biosynthesis; L-arginine from L-ornithine and carbamoyl phosphate: step 3/3. The chain is Argininosuccinate lyase from Aromatoleum aromaticum (strain DSM 19018 / LMG 30748 / EbN1) (Azoarcus sp. (strain EbN1)).